Reading from the N-terminus, the 262-residue chain is Ribosomal RNA small subunit methyltransferase A (262 aa).

Positions 14, 16, 41, 62, 87, and 109 each coordinate S-adenosyl-L-methionine.

This sequence belongs to the class I-like SAM-binding methyltransferase superfamily. rRNA adenine N(6)-methyltransferase family. RsmA subfamily.

It localises to the cytoplasm. The catalysed reaction is adenosine(1518)/adenosine(1519) in 16S rRNA + 4 S-adenosyl-L-methionine = N(6)-dimethyladenosine(1518)/N(6)-dimethyladenosine(1519) in 16S rRNA + 4 S-adenosyl-L-homocysteine + 4 H(+). In terms of biological role, specifically dimethylates two adjacent adenosines (A1518 and A1519) in the loop of a conserved hairpin near the 3'-end of 16S rRNA in the 30S particle. May play a critical role in biogenesis of 30S subunits. The chain is Ribosomal RNA small subunit methyltransferase A from Francisella tularensis subsp. tularensis (strain FSC 198).